Reading from the N-terminus, the 358-residue chain is Ion-translocating oxidoreductase complex subunit D (358 aa).

Transmembrane regions (helical) follow at residues 24–44 (ILAMMPAFFTQIYYFGFGVVL), 79–99 (LTALILAMAIPPYAPYWIIII), and 125–145 (IGYVILLISFPLQMTTWMPPI). At Thr186 the chain carries FMN phosphoryl threonine. 5 helical membrane passes run 220–240 (FAQGWWQINVAFLAGGIFLIL), 248–268 (IPVAMLVTFFCLATATAFTGF), 271–291 (LSAISQLVSGAMMFGAFFIAT), 297–317 (SITPRGKIIFGALVGLFVYLI), and 321–341 (GNYPDGVAFAILLSNICVPLI).

It belongs to the NqrB/RnfD family. The complex is composed of six subunits: RnfA, RnfB, RnfC, RnfD, RnfE and RnfG. It depends on FMN as a cofactor.

It localises to the cell inner membrane. Functionally, part of a membrane-bound complex that couples electron transfer with translocation of ions across the membrane. In Haemophilus influenzae (strain ATCC 51907 / DSM 11121 / KW20 / Rd), this protein is Ion-translocating oxidoreductase complex subunit D.